We begin with the raw amino-acid sequence, 121 residues long: Large ribosomal subunit protein eL18 (121 aa).

The protein belongs to the eukaryotic ribosomal protein eL18 family.

This is Large ribosomal subunit protein eL18 from Methanocaldococcus jannaschii (strain ATCC 43067 / DSM 2661 / JAL-1 / JCM 10045 / NBRC 100440) (Methanococcus jannaschii).